Here is a 72-residue protein sequence, read N- to C-terminus: Translation initiation factor IF-1 (72 aa).

The S1-like domain occupies 1–72; sequence MAKDDVIEIQ…TKGRITYRFK (72 aa).

This sequence belongs to the IF-1 family. As to quaternary structure, component of the 30S ribosomal translation pre-initiation complex which assembles on the 30S ribosome in the order IF-2 and IF-3, IF-1 and N-formylmethionyl-tRNA(fMet); mRNA recruitment can occur at any time during PIC assembly.

It is found in the cytoplasm. Functionally, one of the essential components for the initiation of protein synthesis. Stabilizes the binding of IF-2 and IF-3 on the 30S subunit to which N-formylmethionyl-tRNA(fMet) subsequently binds. Helps modulate mRNA selection, yielding the 30S pre-initiation complex (PIC). Upon addition of the 50S ribosomal subunit IF-1, IF-2 and IF-3 are released leaving the mature 70S translation initiation complex. The protein is Translation initiation factor IF-1 of Lacticaseibacillus paracasei (strain ATCC 334 / BCRC 17002 / CCUG 31169 / CIP 107868 / KCTC 3260 / NRRL B-441) (Lactobacillus paracasei).